Here is a 286-residue protein sequence, read N- to C-terminus: DegV domain-containing protein SPs1668 (286 aa).

In terms of domain architecture, DegV spans 3 to 282 (FTIMTDSTAD…PNTLAVFVIG (280 aa)). Hexadecanoate-binding residues include Thr-62 and Ser-94.

In terms of biological role, may bind long-chain fatty acids, such as palmitate, and may play a role in lipid transport or fatty acid metabolism. This Streptococcus pyogenes serotype M3 (strain SSI-1) protein is DegV domain-containing protein SPs1668.